Consider the following 240-residue polypeptide: Ubiquinone biosynthesis O-methyltransferase (240 aa).

R44, G64, D85, and M129 together coordinate S-adenosyl-L-methionine.

Belongs to the methyltransferase superfamily. UbiG/COQ3 family.

The catalysed reaction is a 3-demethylubiquinol + S-adenosyl-L-methionine = a ubiquinol + S-adenosyl-L-homocysteine + H(+). It carries out the reaction a 3-(all-trans-polyprenyl)benzene-1,2-diol + S-adenosyl-L-methionine = a 2-methoxy-6-(all-trans-polyprenyl)phenol + S-adenosyl-L-homocysteine + H(+). It participates in cofactor biosynthesis; ubiquinone biosynthesis. In terms of biological role, O-methyltransferase that catalyzes the 2 O-methylation steps in the ubiquinone biosynthetic pathway. The polypeptide is Ubiquinone biosynthesis O-methyltransferase (Escherichia coli (strain ATCC 8739 / DSM 1576 / NBRC 3972 / NCIMB 8545 / WDCM 00012 / Crooks)).